The primary structure comprises 303 residues: Flavin-dependent thymidylate synthase (303 aa).

The 218-residue stretch at 41-258 (GKVALVDTMP…PVACEAFIDY (218 aa)) folds into the ThyX domain. FAD is bound by residues Ser95, 118 to 120 (RHR), and Glu126. DUMP is bound by residues 115-118 (QWIR), 126-130 (EYSAR), and Arg197. Positions 118-128 (RHRTANVNEYS) match the ThyX motif motif. FAD-binding positions include 213 to 215 (DLH) and His219. Arg224 lines the dUMP pocket. Arg224 (involved in ionization of N3 of dUMP, leading to its activation) is an active-site residue.

The protein belongs to the thymidylate synthase ThyX family. Homotetramer. FAD serves as cofactor.

The catalysed reaction is dUMP + (6R)-5,10-methylene-5,6,7,8-tetrahydrofolate + NADPH + H(+) = dTMP + (6S)-5,6,7,8-tetrahydrofolate + NADP(+). It functions in the pathway pyrimidine metabolism; dTTP biosynthesis. In terms of biological role, catalyzes the reductive methylation of 2'-deoxyuridine-5'-monophosphate (dUMP) to 2'-deoxythymidine-5'-monophosphate (dTMP) while utilizing 5,10-methylenetetrahydrofolate (mTHF) as the methyl donor, and NADPH and FADH(2) as the reductant. This Dictyostelium discoideum (Social amoeba) protein is Flavin-dependent thymidylate synthase (thyA).